The primary structure comprises 225 residues: Transmembrane protein C16orf54 homolog (225 aa).

A helical transmembrane segment spans residues 34-54 (IPIMLGLASLTAFFIITTAVL). Positions 107-149 (RAPDPPTPGGTLEGRATAPPAIPTPHPSPSSLVPQTPPEVPAQ) are disordered. Phosphothreonine is present on residues Thr-113 and Thr-117. Residue Ser-195 is modified to Phosphoserine.

The protein resides in the membrane. In Rattus norvegicus (Rat), this protein is Transmembrane protein C16orf54 homolog.